A 246-amino-acid polypeptide reads, in one-letter code: Probable transcriptional regulatory protein CTC_02215 (246 aa).

Belongs to the TACO1 family.

It localises to the cytoplasm. The chain is Probable transcriptional regulatory protein CTC_02215 from Clostridium tetani (strain Massachusetts / E88).